Consider the following 229-residue polypeptide: Large ribosomal subunit protein uL1 (229 aa).

This sequence belongs to the universal ribosomal protein uL1 family. In terms of assembly, part of the 50S ribosomal subunit.

Binds directly to 23S rRNA. The L1 stalk is quite mobile in the ribosome, and is involved in E site tRNA release. In terms of biological role, protein L1 is also a translational repressor protein, it controls the translation of the L11 operon by binding to its mRNA. In Clostridium perfringens (strain ATCC 13124 / DSM 756 / JCM 1290 / NCIMB 6125 / NCTC 8237 / Type A), this protein is Large ribosomal subunit protein uL1.